The sequence spans 368 residues: DNA replication and repair protein RecF (368 aa).

30–37 contacts ATP; the sequence is GDNGAGKT.

Belongs to the RecF family.

It localises to the cytoplasm. Functionally, the RecF protein is involved in DNA metabolism; it is required for DNA replication and normal SOS inducibility. RecF binds preferentially to single-stranded, linear DNA. It also seems to bind ATP. The chain is DNA replication and repair protein RecF from Xanthomonas oryzae pv. oryzae (strain KACC10331 / KXO85).